We begin with the raw amino-acid sequence, 810 residues long: Lon protease (810 aa).

In terms of domain architecture, Lon N-terminal spans 8–201 (LPLLPLRGIL…KLCGIVAKEL (194 aa)). 353 to 360 (GPPGVGKT) serves as a coordination point for ATP. The Lon proteolytic domain maps to 589–770 (NDEVGTVTGM…DQVLAIALLE (182 aa)). Active-site residues include S676 and K719.

Belongs to the peptidase S16 family. Homohexamer. Organized in a ring with a central cavity.

It localises to the cytoplasm. The catalysed reaction is Hydrolysis of proteins in presence of ATP.. In terms of biological role, ATP-dependent serine protease that mediates the selective degradation of mutant and abnormal proteins as well as certain short-lived regulatory proteins. Required for cellular homeostasis and for survival from DNA damage and developmental changes induced by stress. Degrades polypeptides processively to yield small peptide fragments that are 5 to 10 amino acids long. Binds to DNA in a double-stranded, site-specific manner. The sequence is that of Lon protease from Desulforamulus reducens (strain ATCC BAA-1160 / DSM 100696 / MI-1) (Desulfotomaculum reducens).